Reading from the N-terminus, the 73-residue chain is MQKLTILLLVAAVLLSTQALNQEKRPKEMINVLSKGKTNAERRKRQCEDVWMPCTSNWECCSLDCEMYCTQIG.

The N-terminal stretch at 1 to 19 (MQKLTILLLVAAVLLSTQA) is a signal peptide. The propeptide occupies 20 to 41 (LNQEKRPKEMINVLSKGKTNAE). The residue at position 46 (glutamine 46) is a Pyrrolidone carboxylic acid. Intrachain disulfides connect cysteine 47–cysteine 61, cysteine 54–cysteine 65, and cysteine 60–cysteine 69. Isoleucine 72 carries the isoleucine amide modification.

It belongs to the conotoxin O2 superfamily. As to expression, expressed by the venom duct.

The protein localises to the secreted. The sequence is that of Conotoxin MaI51 from Conus marmoreus (Marble cone).